Here is a 319-residue protein sequence, read N- to C-terminus: Thioredoxin reductase 1 (319 aa).

Residues 11 to 14 (SGPA), 40 to 41 (IA), glutamine 45, asparagine 54, valine 87, cysteine 145, aspartate 288, and 295 to 297 (RQA) each bind FAD. Cysteines 142 and 145 form a disulfide. A Phosphoserine modification is found at serine 303.

The protein belongs to the class-II pyridine nucleotide-disulfide oxidoreductase family. In terms of assembly, homodimer. FAD serves as cofactor.

The protein resides in the cytoplasm. It is found in the mitochondrion intermembrane space. It catalyses the reaction [thioredoxin]-dithiol + NADP(+) = [thioredoxin]-disulfide + NADPH + H(+). Central component in the thioredoxin system. Reduces thioredoxins 1 and 2. The sequence is that of Thioredoxin reductase 1 (TRR1) from Saccharomyces cerevisiae (strain ATCC 204508 / S288c) (Baker's yeast).